Reading from the N-terminus, the 52-residue chain is Large ribosomal subunit protein bL33 (52 aa).

Belongs to the bacterial ribosomal protein bL33 family.

This is Large ribosomal subunit protein bL33 from Anaeromyxobacter sp. (strain Fw109-5).